Reading from the N-terminus, the 427-residue chain is Glucose-6-phosphate isomerase (427 aa).

Glu-277 (proton donor) is an active-site residue. Residues His-298 and Lys-414 contribute to the active site.

This sequence belongs to the GPI family.

It localises to the cytoplasm. The catalysed reaction is alpha-D-glucose 6-phosphate = beta-D-fructose 6-phosphate. The protein operates within carbohydrate biosynthesis; gluconeogenesis. It participates in carbohydrate degradation; glycolysis; D-glyceraldehyde 3-phosphate and glycerone phosphate from D-glucose: step 2/4. Functionally, catalyzes the reversible isomerization of glucose-6-phosphate to fructose-6-phosphate. The polypeptide is Glucose-6-phosphate isomerase (Mycoplasma mycoides subsp. mycoides SC (strain CCUG 32753 / NCTC 10114 / PG1)).